The following is a 119-amino-acid chain: Large ribosomal subunit protein uL18 (119 aa).

It belongs to the universal ribosomal protein uL18 family. In terms of assembly, part of the 50S ribosomal subunit; part of the 5S rRNA/L5/L18/L25 subcomplex. Contacts the 5S and 23S rRNAs.

This is one of the proteins that bind and probably mediate the attachment of the 5S RNA into the large ribosomal subunit, where it forms part of the central protuberance. The protein is Large ribosomal subunit protein uL18 of Borrelia duttonii (strain Ly).